A 595-amino-acid chain; its full sequence is Glutamyl-tRNA(Gln) amidotransferase subunit B, mitochondrial (595 aa).

Residues 1–114 (MPRLWYSRYL…RAPTSTVAEP (114 aa)) constitute a mitochondrion transit peptide. Residues 59-78 (KEEAKRSKSQSRNGRGKKQV) are disordered.

This sequence belongs to the GatB/GatE family. GatB subfamily. As to quaternary structure, subunit of the heterotrimeric GatCAB amidotransferase (AdT) complex, composed of A, B and C subunits.

The protein resides in the mitochondrion. It carries out the reaction L-glutamyl-tRNA(Gln) + L-glutamine + ATP + H2O = L-glutaminyl-tRNA(Gln) + L-glutamate + ADP + phosphate + H(+). In terms of biological role, allows the formation of correctly charged Gln-tRNA(Gln) through the transamidation of misacylated Glu-tRNA(Gln) in the mitochondria. The reaction takes place in the presence of glutamine and ATP through an activated gamma-phospho-Glu-tRNA(Gln). In Talaromyces stipitatus (strain ATCC 10500 / CBS 375.48 / QM 6759 / NRRL 1006) (Penicillium stipitatum), this protein is Glutamyl-tRNA(Gln) amidotransferase subunit B, mitochondrial.